The following is a 325-amino-acid chain: MKIPAMMSLLLVSVGLRDGVQVQSYSISQLDIFSQETPLDMAPASFDDQYAGCLADMTAALPDLNHSEFQANKVYADGWAQANNQWQERRAWGSVWGSLPPSPPGFRDEHGVALLAYTANSPLHKEFNAAVREAGRSRAHYLHHFSFKTLHFLLTEALQLLRSHRSRGCQQVYRGVHGLRFRPAGPGATVRLGGFASASLKNVAAQQFGEDTFFGIWTCLGAPIRGYSFFPEEEEVLIPPFETFQVINTSRPTQGPARIYLRALGKRSTYNCEYIKEKKCRSGPCWLGSSAPGSISASCSLLLLLLFLVLSALPENPGLQQLTRC.

A signal peptide spans 1–22 (MKIPAMMSLLLVSVGLRDGVQV). 2 cysteine pairs are disulfide-bonded: Cys53-Cys272 and Cys169-Cys219. Asn65 carries N-linked (GlcNAc...) asparagine glycosylation. The region spanning 73–268 (KVYADGWAQA…IYLRALGKRS (196 aa)) is the TR mART core domain. The NAD(+) site is built by Tyr117 and Arg174. Catalysis depends on residues Arg174 and Ser197. An NAD(+)-binding site is contributed by Ser228. Residue Glu235 is part of the active site. Asn248 carries an N-linked (GlcNAc...) asparagine glycan. Ser290 carries the GPI-anchor amidated serine lipid modification. The propeptide at 291–325 (APGSISASCSLLLLLLFLVLSALPENPGLQQLTRC) is removed in mature form.

It belongs to the Arg-specific ADP-ribosyltransferase family. Abundantly expressed in cardiac and skeletal muscle. Low levels also found in lung.

Its subcellular location is the sarcoplasmic reticulum membrane. The catalysed reaction is L-arginyl-[protein] + NAD(+) = N(omega)-(ADP-D-ribosyl)-L-arginyl-[protein] + nicotinamide + H(+). Functionally, has ADP-ribosyltransferase activity toward GLP1R. In Mus musculus (Mouse), this protein is GPI-linked NAD(P)(+)--arginine ADP-ribosyltransferase 1 (Art1).